The following is a 164-amino-acid chain: MTRDLAPALQALSPLLGSWAGRGAGKYPTIRPFEYLEEVVFAHVGKPFLTYTQQTRAVADGKPLHSETGYLRVCRPGCVELVLAHPSGITEIEVGTYSVTGDVIELELSTRADGSIGLAPTAKEVTALDRSYRIDGDELSYSLQMRAVGQPLQDHLAAVLHRQR.

The GXWXGXG motif lies at 17–23 (GSWAGRG). His155 lines the heme b pocket.

Belongs to the nitrobindin family. Homodimer. Heme b serves as cofactor.

It carries out the reaction peroxynitrite = nitrate. The protein operates within nitrogen metabolism. Heme-binding protein able to scavenge peroxynitrite and to protect free L-tyrosine against peroxynitrite-mediated nitration, by acting as a peroxynitrite isomerase that converts peroxynitrite to nitrate. Therefore, this protein likely plays a role in peroxynitrite sensing and in the detoxification of reactive nitrogen and oxygen species (RNS and ROS, respectively). Is able to bind nitric oxide (NO) in vitro, but may act as a sensor of peroxynitrite levels in vivo. The sequence is that of Peroxynitrite isomerase 2 from Mycobacterium bovis (strain BCG / Pasteur 1173P2).